The sequence spans 358 residues: BAG family molecular chaperone regulator 1 (358 aa).

Basic and acidic residues-rich tracts occupy residues 1-14, 26-39, and 85-94; these read MADR…RGDQ, SARE…RAER, and KVAHSKELTR. The tract at residues 1–113 is disordered; the sequence is MADRGGARRP…VTGTQEATQV (113 aa). Repeat copies occupy residues 102-111, 114-119, 120-125, 126-131, 132-137, 144-149, and 150-155. The interval 114–212 is 7 X 6 AA tandem repeat of E-E-X(4); it reads EEVTTIEEAT…LIFKGKSLKE (99 aa). Residues 157–237 form the Ubiquitin-like domain; the sequence is LSVVVTHSNE…VMLIGEKSNP (81 aa). An interaction with HSPA8 region spans residues 185-232; that stretch reads DLAQLVEEATGVPLPFQKLIFKGKSLKEMETPLSALGMQNGCRVMLIG. Residues 229–358 are interaction with PPP1R15A; that stretch reads MLIGEKSNPE…LQSTNLALPE (130 aa). The BAG domain maps to 259–339; that stretch reads HLEELNKELS…VFLAECDTVE (81 aa).

As to quaternary structure, homodimer. Forms a heteromeric complex with HSP70/HSC70. Binds to the ATPase domain of HSP/HSC70 chaperones. Interacts with NR3C1. Interacts with the N-terminal region of MAPRE2. Interacts with PPP1R15A. Interacts with BCL2 in an ATP-dependent manner. Interacts with SIAH1, SIAH2, HSPA8 (via NBD), HSPA1A (via NBD) and HSPA1B (via NBD). Interacts with ESR1; the interaction is promoted in the absence of estradiol (17-beta-estradiol/E2). Ubiquitinated; mediated by SIAH1 or SIAH2 and leading to its subsequent proteasomal degradation. In terms of tissue distribution, expressed in the CA1 region of the hippocampus (at protein level). Expressed in the uterus (at protein level).

Its subcellular location is the nucleus. It localises to the cytoplasm. Co-chaperone for HSP70 and HSC70 chaperone proteins. Acts as a nucleotide-exchange factor (NEF) promoting the release of ADP from the HSP70 and HSC70 proteins thereby triggering client/substrate protein release. Nucleotide release is mediated via its binding to the nucleotide-binding domain (NBD) of HSPA8/HSC70 where as the substrate release is mediated via its binding to the substrate-binding domain (SBD) of HSPA8/HSC70. Inhibits the pro-apoptotic function of PPP1R15A, and has anti-apoptotic activity. Markedly increases the anti-cell death function of BCL2 induced by various stimuli. Involved in the STUB1-mediated proteasomal degradation of ESR1 in response to age-related circulating estradiol (17-beta-estradiol/E2) decline, thereby promotes neuronal apoptosis in response to ischemic reperfusion injury. In Rattus norvegicus (Rat), this protein is BAG family molecular chaperone regulator 1 (Bag1).